A 347-amino-acid chain; its full sequence is Anthranilate phosphoribosyltransferase (347 aa).

Residues G88, 91-92 (GD), T96, 98-101 (NIST), 116-124 (KHGNRSVSS), and S128 each bind 5-phospho-alpha-D-ribose 1-diphosphate. G88 lines the anthranilate pocket. Mg(2+) is bound at residue S100. Residue N119 participates in anthranilate binding. R174 is a binding site for anthranilate. The Mg(2+) site is built by D232 and E233.

The protein belongs to the anthranilate phosphoribosyltransferase family. Homodimer. It depends on Mg(2+) as a cofactor.

The enzyme catalyses N-(5-phospho-beta-D-ribosyl)anthranilate + diphosphate = 5-phospho-alpha-D-ribose 1-diphosphate + anthranilate. The protein operates within amino-acid biosynthesis; L-tryptophan biosynthesis; L-tryptophan from chorismate: step 2/5. Catalyzes the transfer of the phosphoribosyl group of 5-phosphorylribose-1-pyrophosphate (PRPP) to anthranilate to yield N-(5'-phosphoribosyl)-anthranilate (PRA). The chain is Anthranilate phosphoribosyltransferase from Shewanella sp. (strain ANA-3).